Consider the following 206-residue polypeptide: Max dimerization protein 3 (206 aa).

The interaction with SIN3A and SIN3B stretch occupies residues I8–A25. Disordered regions lie at residues Y29–E66 and K122–L171. Positions S57 to L109 constitute a bHLH domain. Low complexity predominate over residues K126 to Q138. The segment covering A143–S153 has biased composition (basic and acidic residues).

In terms of assembly, efficient DNA binding requires dimerization with another bHLH protein. Binds DNA as a heterodimer with MAX. Interacts with SIN3A AND SIN3B. Interacts with RNF17. As to expression, expressed only in the proliferating areas of the testis and thymus.

Its subcellular location is the nucleus. Transcriptional repressor. Binds with MAX to form a sequence-specific DNA-binding protein complex which recognizes the core sequence 5'-CAC[GA]TG-3'. Antagonizes MYC transcriptional activity by competing for MAX and suppresses MYC dependent cell transformation. In Mus musculus (Mouse), this protein is Max dimerization protein 3 (Mxd3).